A 470-amino-acid polypeptide reads, in one-letter code: Low molecular weight neuronal intermediate filament (470 aa).

The head stretch occupies residues 1–91 (MTSRELYTSS…KIVRTNEKEQ (91 aa)). An IF rod domain is found at 88–399 (EKEQLQGLND…KLLEGEETRL (312 aa)). Residues 91-123 (QLQGLNDRFVTYIEKVHHLEQQNKLLESEVTLL) are coil 1A. Residues 121-136 (TLLRQKHSEPSRLSHI) are linker 1. The segment at 137–232 (YEQEIRELRS…KVHEEEIAEL (96 aa)) is coil 1B. Residues 233–251 (QASVQEAQISVEMDVVSKP) form a linker 12 region. Residues 252-270 (DLTAALKEIRMQYEVLSAR) form a coil 2A region. Residues 271 to 279 (NQQSSEEWY) are linker 2. The interval 280–395 (QAKIANVSLE…AAYRKLLEGE (116 aa)) is coil 2B. Positions 396–470 (ETRLTSVGGG…EKISQKAAAN (75 aa)) are tail. Residues 414 to 431 (FSSGSYSGGRSSTTSTIS) are compositionally biased toward low complexity. The tract at residues 414–470 (FSSGSYSGGRSSTTSTISIRKEEKKESPEGGKGGSSGQPKTSKPGDQEKISQKAAAN) is disordered. The span at 432–442 (IRKEEKKESPE) shows a compositional bias: basic and acidic residues.

It belongs to the intermediate filament family. In terms of tissue distribution, nervous system; in axons in the PNS and in small perikarya in the dorsal root ganglion.

The sequence is that of Low molecular weight neuronal intermediate filament from Xenopus laevis (African clawed frog).